A 646-amino-acid chain; its full sequence is Protein kinase YegI (646 aa).

Residues 13-300 (VTPGRELGKG…KAWVAALDLL (288 aa)) enclose the Protein kinase domain. Residues 19 to 27 (LGKGGEGAV) and Lys39 each bind ATP. The active-site Proton acceptor is Asp141.

Post-translationally, autophosphorylated.

Probable serine/threonine kinase. In Escherichia coli O157:H7, this protein is Protein kinase YegI (yegI).